Here is a 367-residue protein sequence, read N- to C-terminus: 15-cis-zeta-carotene isomerase, chloroplastic (367 aa).

The N-terminal 58 residues, 1–58 (MAVYHLLLSSPPSLLLLPPSPRRPNLTLIRRIPAHPRLGNSTSLLSSSSPVIRKILVR), are a transit peptide targeting the chloroplast. 6 helical membrane-spanning segments follow: residues 95–115 (SWVY…VVWI), 137–157 (EVAM…LASL), 172–192 (VLFA…FINH), 211–231 (AIWV…FNLL), 269–289 (LWIG…HHLF), and 339–359 (LPYL…PLMQ).

As to expression, expressed in leaves and at lower levels in roots.

Its subcellular location is the plastid. The protein localises to the chloroplast membrane. The enzyme catalyses 9,9',15-tri-cis-zeta-carotene = 9,9'-di-cis-zeta-carotene. Functionally, isomerase involved in the biosynthesis of carotenoids. Catalyzes the cis- to trans-conversion of the 15-cis-bond in 9,15,9'-tri-cis-zeta-carotene. The chain is 15-cis-zeta-carotene isomerase, chloroplastic (Z-ISO) from Arabidopsis thaliana (Mouse-ear cress).